Consider the following 105-residue polypeptide: uncharacterized protein (105 aa).

A helical transmembrane segment spans residues 41-62; that stretch reads GIITKIAASPFVIVLYFNTAFF.

It is found in the membrane. This is an uncharacterized protein from Saccharomyces cerevisiae (strain ATCC 204508 / S288c) (Baker's yeast).